The following is a 325-amino-acid chain: Nod factor export ATP-binding protein I (325 aa).

The 231-residue stretch at 27–257 folds into the ABC transporter domain; sequence LELRKVRKQY…QIGCDVVEVY (231 aa). 59–66 is a binding site for ATP; sequence GPNGAGKT.

Belongs to the ABC transporter superfamily. Lipooligosaccharide exporter (TC 3.A.1.102) family. In terms of assembly, the complex is composed of two ATP-binding proteins (NodI) and two transmembrane proteins (NodJ).

It localises to the cell inner membrane. Part of the ABC transporter complex NodIJ involved in the export of the nodulation factors (Nod factors), the bacterial signal molecules that induce symbiosis and subsequent nodulation induction. Nod factors are LCO (lipo-chitin oligosaccharide), a modified beta-1,4-linked N-acetylglucosamine oligosaccharide. This subunit is responsible for energy coupling to the transport system. The sequence is that of Nod factor export ATP-binding protein I from Cupriavidus pinatubonensis (strain JMP 134 / LMG 1197) (Cupriavidus necator (strain JMP 134)).